The primary structure comprises 395 residues: Phosphoglycerate kinase (395 aa).

Substrate contacts are provided by residues 21–23 (DLN), Arg-36, 59–62 (HLGR), Arg-113, and Arg-146. Residues Lys-197, Glu-324, and 350–353 (GGDT) contribute to the ATP site.

This sequence belongs to the phosphoglycerate kinase family. In terms of assembly, monomer.

The protein localises to the cytoplasm. It catalyses the reaction (2R)-3-phosphoglycerate + ATP = (2R)-3-phospho-glyceroyl phosphate + ADP. The protein operates within carbohydrate degradation; glycolysis; pyruvate from D-glyceraldehyde 3-phosphate: step 2/5. In Acinetobacter baumannii (strain AB307-0294), this protein is Phosphoglycerate kinase.